A 345-amino-acid polypeptide reads, in one-letter code: Small ribosomal subunit biogenesis GTPase RsgA (345 aa).

The disordered stretch occupies residues 1 to 36 (MSKNKLSKGQERRVQANHQRRLQQRERGAAHWDDQP). The segment covering 23-34 (QQRERGAAHWDD) has biased composition (basic and acidic residues). The CP-type G domain maps to 103 to 273 (RSVLTRPDVY…LIDSPGVREL (171 aa)). Residues 159–162 (NKID) and 213–221 (GQSGVGKSS) each bind GTP. 4 residues coordinate Zn(2+): C297, C302, H304, and C310.

The protein belongs to the TRAFAC class YlqF/YawG GTPase family. RsgA subfamily. Monomer. Associates with 30S ribosomal subunit, binds 16S rRNA. The cofactor is Zn(2+).

It localises to the cytoplasm. Its function is as follows. One of several proteins that assist in the late maturation steps of the functional core of the 30S ribosomal subunit. Helps release RbfA from mature subunits. May play a role in the assembly of ribosomal proteins into the subunit. Circularly permuted GTPase that catalyzes slow GTP hydrolysis, GTPase activity is stimulated by the 30S ribosomal subunit. The chain is Small ribosomal subunit biogenesis GTPase RsgA from Sodalis glossinidius (strain morsitans).